We begin with the raw amino-acid sequence, 268 residues long: Ribosomal RNA small subunit methyltransferase A (268 aa).

S-adenosyl-L-methionine is bound by residues Asn19, Leu21, Gly46, Glu67, Asp92, and Asn113.

Belongs to the class I-like SAM-binding methyltransferase superfamily. rRNA adenine N(6)-methyltransferase family. RsmA subfamily.

It localises to the cytoplasm. It catalyses the reaction adenosine(1518)/adenosine(1519) in 16S rRNA + 4 S-adenosyl-L-methionine = N(6)-dimethyladenosine(1518)/N(6)-dimethyladenosine(1519) in 16S rRNA + 4 S-adenosyl-L-homocysteine + 4 H(+). Its function is as follows. Specifically dimethylates two adjacent adenosines (A1518 and A1519) in the loop of a conserved hairpin near the 3'-end of 16S rRNA in the 30S particle. May play a critical role in biogenesis of 30S subunits. This is Ribosomal RNA small subunit methyltransferase A from Tolumonas auensis (strain DSM 9187 / NBRC 110442 / TA 4).